The primary structure comprises 239 residues: Cell number regulator 6 (239 aa).

Over residues 1–10 the composition is skewed to polar residues; sequence MAEDATSSHP. The disordered stretch occupies residues 1 to 33; the sequence is MAEDATSSHPSRYVKLTKDQDAPAEDIRPGELN. The segment covering 16–29 has biased composition (basic and acidic residues); the sequence is LTKDQDAPAEDIRP. 2 helical membrane-spanning segments follow: residues 107–127 and 136–156; these read CVCHAVFVEGGITLAILTAIF and FLIGEGLVFSWWLCATYTGIF.

It belongs to the cornifelin family. In terms of tissue distribution, expressed in roots, leaves, stalks, apical meristems, immature ears, endosperm, pericarp and tassel spikelets.

It localises to the membrane. This chain is Cell number regulator 6 (CNR6), found in Zea mays (Maize).